We begin with the raw amino-acid sequence, 64 residues long: MAARCAVCGKGPQTGFTVSHSHRRTKRSFRPNLQSVRTTIDGENTRLRVCVKCLKAGKVQRVAA.

Belongs to the bacterial ribosomal protein bL28 family.

This chain is Large ribosomal subunit protein bL28, found in Bifidobacterium longum (strain NCC 2705).